Consider the following 223-residue polypeptide: Cytidylate kinase (223 aa).

Residue 13-21 (GPSASGKGT) participates in ATP binding.

It belongs to the cytidylate kinase family. Type 1 subfamily.

It localises to the cytoplasm. It catalyses the reaction CMP + ATP = CDP + ADP. The catalysed reaction is dCMP + ATP = dCDP + ADP. This chain is Cytidylate kinase, found in Nitrosomonas europaea (strain ATCC 19718 / CIP 103999 / KCTC 2705 / NBRC 14298).